A 51-amino-acid polypeptide reads, in one-letter code: Ribosomal protein eL39-like 2 (51 aa).

This sequence belongs to the eukaryotic ribosomal protein eL39 family. Component of a male germ cell-specific 60S large ribosomal subunit (LSU), which contains RPL10L and RPL39L, instead of RPL10 and RPL39 paralogs. The composition of the rest of the complex is similar to classical ribosomes. Testis specific.

The protein resides in the cytoplasm. Its function is as follows. Male germ cell-specific component of the ribosome, which is required for the formation of sperm and male fertility. Replaces the RPL39 paralog in the ribosome of male germ cells. The ribosome is a large ribonucleoprotein complex responsible for the synthesis of proteins in the cell. The male germ cell-specific ribosome displays a ribosomal polypeptide exit tunnel of distinct size and charge states compared with the classical ribosome. It is responsible for regulating the biosynthesis and folding of a subset of male germ-cell-specific proteins that are essential for the formation of sperm. This Homo sapiens (Human) protein is Ribosomal protein eL39-like 2.